A 396-amino-acid polypeptide reads, in one-letter code: S-adenosylmethionine decarboxylase proenzyme (396 aa).

Active-site residues include Glu-29 and Glu-32. Ser-88 acts as the Schiff-base intermediate with substrate; via pyruvic acid in catalysis. Ser-88 bears the Pyruvic acid (Ser); by autocatalysis mark. Cys-102 serves as the catalytic Proton donor; for catalytic activity. Residues Ser-287 and His-301 each act as proton acceptor; for processing activity in the active site.

This sequence belongs to the eukaryotic AdoMetDC family. Pyruvate is required as a cofactor. Is synthesized initially as an inactive proenzyme. Formation of the active enzyme involves a self-maturation process in which the active site pyruvoyl group is generated from an internal serine residue via an autocatalytic post-translational modification. Two non-identical subunits are generated from the proenzyme in this reaction, and the pyruvate is formed at the N-terminus of the alpha chain, which is derived from the carboxyl end of the proenzyme. The post-translation cleavage follows an unusual pathway, termed non-hydrolytic serinolysis, in which the side chain hydroxyl group of the serine supplies its oxygen atom to form the C-terminus of the beta chain, while the remainder of the serine residue undergoes an oxidative deamination to produce ammonia and the pyruvoyl group blocking the N-terminus of the alpha chain.

It catalyses the reaction S-adenosyl-L-methionine + H(+) = S-adenosyl 3-(methylsulfanyl)propylamine + CO2. It functions in the pathway amine and polyamine biosynthesis; S-adenosylmethioninamine biosynthesis; S-adenosylmethioninamine from S-adenosyl-L-methionine: step 1/1. Functionally, catalyzes the decarboxylation of S-adenosylmethionine, a key step in the biosynthetic pathway for spermidine and spermine. It is essential for normal growth, sporulation, and maintenance of ds-RNA virus. The protein is S-adenosylmethionine decarboxylase proenzyme (SPE2) of Saccharomyces cerevisiae (strain ATCC 204508 / S288c) (Baker's yeast).